The following is a 201-amino-acid chain: Small ribosomal subunit protein uS2 (201 aa).

This sequence belongs to the universal ribosomal protein uS2 family. As to quaternary structure, part of the 50S ribosomal subunit.

This chain is Small ribosomal subunit protein uS2, found in Thermococcus kodakarensis (strain ATCC BAA-918 / JCM 12380 / KOD1) (Pyrococcus kodakaraensis (strain KOD1)).